Reading from the N-terminus, the 207-residue chain is Ribonuclease HII (207 aa).

Residues 1-207 (MDVLGIDEAG…ATVEKMKNSQ (207 aa)) form the RNase H type-2 domain. Residues Asp-7, Glu-8, and Asp-105 each contribute to the a divalent metal cation site.

It belongs to the RNase HII family. It depends on Mn(2+) as a cofactor. Requires Mg(2+) as cofactor.

The protein resides in the cytoplasm. The catalysed reaction is Endonucleolytic cleavage to 5'-phosphomonoester.. Its function is as follows. Endonuclease that specifically degrades the RNA of RNA-DNA hybrids. This is Ribonuclease HII from Methanobrevibacter smithii (strain ATCC 35061 / DSM 861 / OCM 144 / PS).